The following is a 123-amino-acid chain: UPF0102 protein VFMJ11_2324 (123 aa).

Belongs to the UPF0102 family.

In Aliivibrio fischeri (strain MJ11) (Vibrio fischeri), this protein is UPF0102 protein VFMJ11_2324.